The following is a 339-amino-acid chain: Ketol-acid reductoisomerase (NADP(+)) (339 aa).

A KARI N-terminal Rossmann domain is found at 1–182 (MRVYYDRDAD…GGGRAGIIET (182 aa)). Residues 24–27 (YGSQ), Arg-48, Ser-51, Ser-53, and 83–86 (DELQ) each bind NADP(+). His-108 is a catalytic residue. Gly-134 contacts NADP(+). The KARI C-terminal knotted domain maps to 183–328 (TFREECETDL…AKLRDMMPWI (146 aa)). Mg(2+) contacts are provided by Asp-191, Glu-195, Glu-227, and Glu-231. Position 252 (Ser-252) interacts with substrate.

Belongs to the ketol-acid reductoisomerase family. Mg(2+) serves as cofactor.

The enzyme catalyses (2R)-2,3-dihydroxy-3-methylbutanoate + NADP(+) = (2S)-2-acetolactate + NADPH + H(+). The catalysed reaction is (2R,3R)-2,3-dihydroxy-3-methylpentanoate + NADP(+) = (S)-2-ethyl-2-hydroxy-3-oxobutanoate + NADPH + H(+). It participates in amino-acid biosynthesis; L-isoleucine biosynthesis; L-isoleucine from 2-oxobutanoate: step 2/4. The protein operates within amino-acid biosynthesis; L-valine biosynthesis; L-valine from pyruvate: step 2/4. Its function is as follows. Involved in the biosynthesis of branched-chain amino acids (BCAA). Catalyzes an alkyl-migration followed by a ketol-acid reduction of (S)-2-acetolactate (S2AL) to yield (R)-2,3-dihydroxy-isovalerate. In the isomerase reaction, S2AL is rearranged via a Mg-dependent methyl migration to produce 3-hydroxy-3-methyl-2-ketobutyrate (HMKB). In the reductase reaction, this 2-ketoacid undergoes a metal-dependent reduction by NADPH to yield (R)-2,3-dihydroxy-isovalerate. This chain is Ketol-acid reductoisomerase (NADP(+)), found in Rhodopseudomonas palustris (strain ATCC BAA-98 / CGA009).